The following is a 691-amino-acid chain: DNA ligase (691 aa).

NAD(+) is bound by residues 53–57, 102–103, and E135; these read DSEYD and SL. K137 serves as the catalytic N6-AMP-lysine intermediate. NAD(+) contacts are provided by R158, E195, K310, and K334. Residues C428, C431, C446, and C452 each contribute to the Zn(2+) site. A BRCT domain is found at 613-691; that stretch reads SEGLPLDGQT…EEEFLALVGE (79 aa).

Belongs to the NAD-dependent DNA ligase family. LigA subfamily. Mg(2+) serves as cofactor. The cofactor is Mn(2+).

The enzyme catalyses NAD(+) + (deoxyribonucleotide)n-3'-hydroxyl + 5'-phospho-(deoxyribonucleotide)m = (deoxyribonucleotide)n+m + AMP + beta-nicotinamide D-nucleotide.. In terms of biological role, DNA ligase that catalyzes the formation of phosphodiester linkages between 5'-phosphoryl and 3'-hydroxyl groups in double-stranded DNA using NAD as a coenzyme and as the energy source for the reaction. It is essential for DNA replication and repair of damaged DNA. In Psychrobacter arcticus (strain DSM 17307 / VKM B-2377 / 273-4), this protein is DNA ligase.